The following is a 215-amino-acid chain: Large ribosomal subunit protein uL3 (215 aa).

Q151 carries the N5-methylglutamine modification.

The protein belongs to the universal ribosomal protein uL3 family. As to quaternary structure, part of the 50S ribosomal subunit. Forms a cluster with proteins L14 and L19. In terms of processing, methylated by PrmB.

Functionally, one of the primary rRNA binding proteins, it binds directly near the 3'-end of the 23S rRNA, where it nucleates assembly of the 50S subunit. In Rickettsia bellii (strain OSU 85-389), this protein is Large ribosomal subunit protein uL3.